Reading from the N-terminus, the 408-residue chain is MKPARLLLLLSGCALLLAPAVRCCGPGRVVGSRRRPPRKLIPLAYKQFSPNVPEKTLGASGRYEGKIARNSERFKELTPNYNPDIIFKDEENTGADRLMTQRCKDRLNSLAISVMNQWPGVKLRVTEGWDEDGHHSEESLHYEGRAVDITTSDRDRNKYGMLARLAVEAGFDWVYYESKAHIHCSVKSEHSAAAKTGGCFPGRALATLENGARTPLWALRPGQRVLAMDGAGRPTYSDFLAFLDKEPRALTAFHVIETRQPPRRLALTPTHLLFVADNASAPAAQFRPTFASHVQPGHFVLVAVGSGGLQPAEVVGVRGRTDVGAYAPLTRHGTLVVDDVVASCFALVREQQLAQMAFWPLRLYHSLLGGPGVQGDGVHWYSGLLYRLGRMLLPPDSFHPLGAPRAES.

An N-terminal signal peptide occupies residues 1–23; it reads MKPARLLLLLSGCALLLAPAVRC. Residue Cys24 is the site of N-palmitoyl cysteine attachment. Ca(2+) is bound by residues Glu90, Glu91, Asp96, Thr126, Glu127, Asp130, and Asp132. Zn(2+) is bound by residues His141, Asp148, and His183. A lipid anchor (Cholesterol glycine ester) is attached at Gly198.

This sequence belongs to the hedgehog family. As to quaternary structure, multimer. In terms of assembly, interacts with BOC and CDON. Interacts with PTCH1. Interacts with glypican GPC3. Cholesterylation is required for N-product targeting to lipid rafts and multimerization. Post-translationally, the C-terminal domain displays an autoproteolysis activity and a cholesterol transferase activity. Both activities result in the cleavage of the full-length protein and covalent attachment of a cholesterol moiety to the C-terminal of the newly generated N-product. The N-product is the active species in both local and long-range signaling, whereas the C-product is degraded in the endoplasmic reticulum. In terms of processing, N-palmitoylation by HHAT of N-product is required for indian hedgehog protein N-product multimerization and full activity. As to expression, expressed in developing midgut, lung and cartilage of developing long bones in the limb.

It is found in the cell membrane. Its subcellular location is the endoplasmic reticulum membrane. The protein localises to the golgi apparatus membrane. The protein resides in the secreted. The catalysed reaction is glycyl-L-cysteinyl-[protein] + cholesterol + H(+) = [protein]-C-terminal glycyl cholesterol ester + N-terminal L-cysteinyl-[protein]. Functionally, plays a role in embryonic morphogenesis; it is involved in the regulation of endochondral skeleton formation, and the development of retinal pigment epithelium (RPE), photoreceptors and periocular tissues. In terms of biological role, the C-terminal part of the indian hedgehog protein precursor displays an autoproteolysis and a cholesterol transferase activity. Both activities result in the cleavage of the full-length protein into two parts followed by the covalent attachment of a cholesterol moiety to the C-terminal of the newly generated N-product. Both activities occur in the endoplasmic reticulum. Its function is as follows. The dually lipidated indian hedgehog protein N-product is a morphogen which is essential for a variety of patterning events during development. Binds to the patched (PTCH1) receptor, which functions in association with smoothened (SMO), to activate the transcription of target genes. Plays a role in morphogenesis of the skeleton by coordinating growth and differentiation of the endochondral skeleton. Positively regulates PTHLH expression during endochondral bone formation preventing chondrocyte hypertrophy. In contrast, participates in normal chondrocyte proliferation in a PTHLH-independent pathway. The protein is Indian hedgehog protein of Gallus gallus (Chicken).